Here is a 266-residue protein sequence, read N- to C-terminus: Probable phosphoadenosine phosphosulfate reductase (266 aa).

Residues 219–246 (TQPVREGEDERAGRWRGREKTECGLHSH) are disordered. Positions 223 to 243 (REGEDERAGRWRGREKTECGL) are enriched in basic and acidic residues.

This sequence belongs to the PAPS reductase family. CysH subfamily.

Its subcellular location is the cytoplasm. The protein localises to the nucleus. It carries out the reaction [thioredoxin]-disulfide + sulfite + adenosine 3',5'-bisphosphate + 2 H(+) = [thioredoxin]-dithiol + 3'-phosphoadenylyl sulfate. It functions in the pathway sulfur metabolism; hydrogen sulfide biosynthesis; sulfite from sulfate: step 3/3. The NADP dependent reduction of PAPS into sulfite involves thioredoxin which probably plays the role of a thiol carrier. Required for methionine synthesis. This is Probable phosphoadenosine phosphosulfate reductase (met16) from Schizosaccharomyces pombe (strain 972 / ATCC 24843) (Fission yeast).